Reading from the N-terminus, the 277-residue chain is Phosphate import ATP-binding protein PstB (277 aa).

An ABC transporter domain is found at 31–272 (IEVPGLSLFY…PAKKQTEDYI (242 aa)). 63 to 70 (GPSGCGKS) is a binding site for ATP.

Belongs to the ABC transporter superfamily. Phosphate importer (TC 3.A.1.7) family. The complex is composed of two ATP-binding proteins (PstB), two transmembrane proteins (PstC and PstA) and a solute-binding protein (PstS).

The protein localises to the cell inner membrane. The catalysed reaction is phosphate(out) + ATP + H2O = ADP + 2 phosphate(in) + H(+). Part of the ABC transporter complex PstSACB involved in phosphate import. Responsible for energy coupling to the transport system. This chain is Phosphate import ATP-binding protein PstB, found in Pseudomonas fluorescens (strain Pf0-1).